We begin with the raw amino-acid sequence, 51 residues long: Glutamine synthetase (51 aa).

This sequence belongs to the glutamine synthetase family. As to quaternary structure, homooctamer.

Its subcellular location is the cytoplasm. The catalysed reaction is L-glutamate + NH4(+) + ATP = L-glutamine + ADP + phosphate + H(+). In Vitis sp. (Grape), this protein is Glutamine synthetase.